A 200-amino-acid polypeptide reads, in one-letter code: LexA repressor (200 aa).

Residues 29–48 constitute a DNA-binding region (H-T-H motif); the sequence is IRDIARAFRITPRGAIVHLN. Active-site for autocatalytic cleavage activity residues include serine 120 and lysine 158.

Belongs to the peptidase S24 family. In terms of assembly, homodimer.

It carries out the reaction Hydrolysis of Ala-|-Gly bond in repressor LexA.. In terms of biological role, represses a number of genes involved in the response to DNA damage (SOS response), including recA and lexA. In the presence of single-stranded DNA, RecA interacts with LexA causing an autocatalytic cleavage which disrupts the DNA-binding part of LexA, leading to derepression of the SOS regulon and eventually DNA repair. In Pseudothermotoga lettingae (strain ATCC BAA-301 / DSM 14385 / NBRC 107922 / TMO) (Thermotoga lettingae), this protein is LexA repressor.